Reading from the N-terminus, the 511-residue chain is Bifunctional purine biosynthesis protein PurH (511 aa).

Residues 1–145 enclose the MGS-like domain; the sequence is MKKRALVSVS…KNHKFVSVIV (145 aa).

Belongs to the PurH family.

It catalyses the reaction (6R)-10-formyltetrahydrofolate + 5-amino-1-(5-phospho-beta-D-ribosyl)imidazole-4-carboxamide = 5-formamido-1-(5-phospho-D-ribosyl)imidazole-4-carboxamide + (6S)-5,6,7,8-tetrahydrofolate. The catalysed reaction is IMP + H2O = 5-formamido-1-(5-phospho-D-ribosyl)imidazole-4-carboxamide. It functions in the pathway purine metabolism; IMP biosynthesis via de novo pathway; 5-formamido-1-(5-phospho-D-ribosyl)imidazole-4-carboxamide from 5-amino-1-(5-phospho-D-ribosyl)imidazole-4-carboxamide (10-formyl THF route): step 1/1. Its pathway is purine metabolism; IMP biosynthesis via de novo pathway; IMP from 5-formamido-1-(5-phospho-D-ribosyl)imidazole-4-carboxamide: step 1/1. The protein is Bifunctional purine biosynthesis protein PurH of Bacillus thuringiensis subsp. konkukian (strain 97-27).